The following is a 191-amino-acid chain: Stress response regulator protein 1 (191 aa).

In terms of domain architecture, Response regulatory spans 62-181 (SFLLVDDNEI…TNYILQKIEQ (120 aa)). Position 114 is a 4-aspartylphosphate (D114).

In terms of biological role, required for stress adaptation, morphogenesis and virulence. This is Stress response regulator protein 1 (SRR1) from Clavispora lusitaniae (strain ATCC 42720) (Yeast).